We begin with the raw amino-acid sequence, 63 residues long: Large ribosomal subunit protein uL29 (63 aa).

It belongs to the universal ribosomal protein uL29 family.

The polypeptide is Large ribosomal subunit protein uL29 (Enterobacter sp. (strain 638)).